Here is a 156-residue protein sequence, read N- to C-terminus: 6,7-dimethyl-8-ribityllumazine synthase (156 aa).

Residues phenylalanine 23, 57 to 59 (AYE), and 81 to 83 (AII) each bind 5-amino-6-(D-ribitylamino)uracil. 86–87 (GT) is a (2S)-2-hydroxy-3-oxobutyl phosphate binding site. Catalysis depends on histidine 89, which acts as the Proton donor. Phenylalanine 114 serves as a coordination point for 5-amino-6-(D-ribitylamino)uracil. (2S)-2-hydroxy-3-oxobutyl phosphate is bound at residue arginine 128.

Belongs to the DMRL synthase family.

It carries out the reaction (2S)-2-hydroxy-3-oxobutyl phosphate + 5-amino-6-(D-ribitylamino)uracil = 6,7-dimethyl-8-(1-D-ribityl)lumazine + phosphate + 2 H2O + H(+). Its pathway is cofactor biosynthesis; riboflavin biosynthesis; riboflavin from 2-hydroxy-3-oxobutyl phosphate and 5-amino-6-(D-ribitylamino)uracil: step 1/2. Catalyzes the formation of 6,7-dimethyl-8-ribityllumazine by condensation of 5-amino-6-(D-ribitylamino)uracil with 3,4-dihydroxy-2-butanone 4-phosphate. This is the penultimate step in the biosynthesis of riboflavin. The polypeptide is 6,7-dimethyl-8-ribityllumazine synthase (Helicobacter pylori (strain P12)).